Here is an 881-residue protein sequence, read N- to C-terminus: Squamosa promoter-binding-like protein 1 (881 aa).

The disordered stretch occupies residues 49–69 (FPLGNSSNSSSSCSDEGNDKK). Residues 53 to 62 (NSSNSSSSCS) show a composition bias toward low complexity. The sufficient and necessary for DNA binding stretch occupies residues 96 to 187 (PAKKTKSGAV…RKTNPEPGAN (92 aa)). Residues 103–180 (GAVCQVENCE…AGHNKRRRKT (78 aa)) form an SBP-type zinc finger. Positions 106, 111, 128, 131, 147, 150, 154, and 166 each coordinate Zn(2+). A Bipartite nuclear localization signal motif is present at residues 163-179 (KRSCRRRLAGHNKRRRK). Residues 170-179 (LAGHNKRRRK) show a composition bias toward basic residues. Disordered stretches follow at residues 170 to 193 (LAGH…PSDD) and 274 to 358 (FSAR…EDAQ). The segment covering 275 to 284 (SARQDGTATE) has biased composition (polar residues). A compositionally biased stretch (basic and acidic residues) spans 285–295 (NRSEKQVKMND). Residues 319–338 (PATSSLDYPSWIHQSSPPQT) show a composition bias toward polar residues. Residues 339–356 (SRNSDSASDQSPSSSSED) are compositionally biased toward low complexity.

The cofactor is Zn(2+).

The protein resides in the nucleus. In terms of biological role, trans-acting factor that binds specifically to the consensus nucleotide sequence 5'-TNCGTACAA-3' of AP1 promoter. Binds specifically to the 5'-GTAC-3' core sequence. This chain is Squamosa promoter-binding-like protein 1 (SPL1), found in Arabidopsis thaliana (Mouse-ear cress).